Reading from the N-terminus, the 324-residue chain is Phospho-N-acetylmuramoyl-pentapeptide-transferase (324 aa).

A run of 10 helical transmembrane segments spans residues glycine 5 to isoleucine 25, proline 52 to isoleucine 72, leucine 77 to leucine 97, valine 122 to isoleucine 142, phenylalanine 149 to alanine 169, leucine 176 to valine 196, phenylalanine 201 to asparagine 221, valine 227 to leucine 247, leucine 253 to isoleucine 273, and valine 302 to valine 322.

It belongs to the glycosyltransferase 4 family. MraY subfamily. Requires Mg(2+) as cofactor.

It localises to the cell membrane. It carries out the reaction UDP-N-acetyl-alpha-D-muramoyl-L-alanyl-gamma-D-glutamyl-meso-2,6-diaminopimeloyl-D-alanyl-D-alanine + di-trans,octa-cis-undecaprenyl phosphate = di-trans,octa-cis-undecaprenyl diphospho-N-acetyl-alpha-D-muramoyl-L-alanyl-D-glutamyl-meso-2,6-diaminopimeloyl-D-alanyl-D-alanine + UMP. It participates in cell wall biogenesis; peptidoglycan biosynthesis. Catalyzes the initial step of the lipid cycle reactions in the biosynthesis of the cell wall peptidoglycan: transfers peptidoglycan precursor phospho-MurNAc-pentapeptide from UDP-MurNAc-pentapeptide onto the lipid carrier undecaprenyl phosphate, yielding undecaprenyl-pyrophosphoryl-MurNAc-pentapeptide, known as lipid I. This chain is Phospho-N-acetylmuramoyl-pentapeptide-transferase, found in Bacillus cereus (strain AH820).